The sequence spans 713 residues: Mitochondrial intermediate peptidase (713 aa).

A mitochondrion-targeting transit peptide spans 1–35 (MLCVGRLGGLGARAAALPPRRAGRGSLEAGIRARR). Lysine 126 is modified (N6-acetyllysine). Histidine 495 serves as a coordination point for Zn(2+). The active site involves glutamate 496. Histidine 499 and histidine 502 together coordinate Zn(2+).

Belongs to the peptidase M3 family. As to quaternary structure, monomer. The cofactor is Zn(2+).

Its subcellular location is the mitochondrion matrix. It catalyses the reaction Release of an N-terminal octapeptide as second stage of processing of some proteins imported into the mitochondrion.. Its activity is regulated as follows. Activity is divalent cation-dependent. It is stimulated by manganese, magnesium or calcium ions and reversibly inhibited by zinc, cobalt and iron. Functionally, cleaves proteins, imported into the mitochondrion, to their mature size. In Homo sapiens (Human), this protein is Mitochondrial intermediate peptidase (MIPEP).